A 1146-amino-acid polypeptide reads, in one-letter code: Ankyrin repeat and fibronectin type-III domain-containing protein 1 (1146 aa).

ANK repeat units follow at residues 133-162 and 170-199; these read QGNEAMFEAVEQQDMDAVQILLYQYTPEEL and EGLTPLDIAIMTNNVPIARILLRTGARESP. The Fibronectin type-III domain maps to 270 to 366; the sequence is MPTNVCLMVT…TTTPACASPS (97 aa). Residues 607 to 614 are highly conserved peptide sequence; sequence GLYLGYLK. Disordered stretches follow at residues 855-887, 945-964, and 1106-1146; these read NSTSSSHIDCLPSPPPSPEMHRRKTVSDSQPCS, VKTPLGPGQDPQGEGPNPDH, and PWAS…SSML. The segment covering 1131-1146 has biased composition (polar residues); it reads EGPTASPMSEILSSML.

Its function is as follows. May play a role in neuronal function. This is Ankyrin repeat and fibronectin type-III domain-containing protein 1 from Homo sapiens (Human).